Reading from the N-terminus, the 183-residue chain is CASP-like protein UU1 (183 aa).

Over 1 to 33 (MEESQQQSTKFDAPPSPYVPSRVYLAQIYWKKP) the chain is Cytoplasmic. The chain crosses the membrane as a helical span at residues 34–54 (AIVVLRVLQFVFSLIAFSVMA). Over 55–72 (DLLHDVQGSIKSLSYTVA) the chain is Extracellular. Residues 73-93 (IGVLACAYALAQLSFSLWCVI) form a helical membrane-spanning segment. Topologically, residues 94-118 (RGATSSSGVTPLYQYATFICDQMST) are cytoplasmic. Residues 119–139 (YFLISAASATATLIDVSGVCG) form a helical membrane-spanning segment. The Extracellular portion of the chain corresponds to 140–156 (SNGSGTNLCSRSTASVT). N-linked (GlcNAc...) asparagine glycosylation occurs at N141. The helical transmembrane segment at 157–177 (FAFLAFLAFSASSVLTGYYLV) threads the bilayer. At 178 to 183 (KCILKA) the chain is on the cytoplasmic side.

The protein belongs to the Casparian strip membrane proteins (CASP) family. Homodimer and heterodimers.

It is found in the cell membrane. This chain is CASP-like protein UU1, found in Selaginella moellendorffii (Spikemoss).